A 119-amino-acid polypeptide reads, in one-letter code: V-type proton ATPase subunit F (119 aa).

This sequence belongs to the V-ATPase F subunit family. In terms of assembly, V-ATPase is a heteromultimeric enzyme composed of a peripheral catalytic V1 complex (components A to H) attached to an integral membrane V0 proton pore complex (components: a, c, c', c'', d, e, f and VOA1).

The protein resides in the vacuole membrane. Its function is as follows. Subunit of the V1 complex of vacuolar(H+)-ATPase (V-ATPase), a multisubunit enzyme composed of a peripheral complex (V1) that hydrolyzes ATP and a membrane integral complex (V0) that translocates protons. V-ATPase is responsible for acidifying and maintaining the pH of intracellular compartments. In Vanderwaltozyma polyspora (strain ATCC 22028 / DSM 70294 / BCRC 21397 / CBS 2163 / NBRC 10782 / NRRL Y-8283 / UCD 57-17) (Kluyveromyces polysporus), this protein is V-type proton ATPase subunit F (VMA7).